Reading from the N-terminus, the 329-residue chain is Malate dehydrogenase (329 aa).

12 to 18 contributes to the NAD(+) binding site; it reads GAAGQIG. The substrate site is built by arginine 93 and arginine 99. NAD(+)-binding positions include asparagine 106, glutamine 113, and 130–132; that span reads VGN. Residues asparagine 132 and arginine 163 each coordinate substrate. Histidine 188 serves as the catalytic Proton acceptor.

This sequence belongs to the LDH/MDH superfamily. MDH type 2 family.

The enzyme catalyses (S)-malate + NAD(+) = oxaloacetate + NADH + H(+). With respect to regulation, strongly inhibited by Hg(2+) and Zn(2+). Activated by Na(+), NH(4)(+), Ca(2+), Cu(2+) and Mg(2+). In terms of biological role, catalyzes the reversible oxidation of malate to oxaloacetate. Exhibits remarkably higher catalytic efficiency for oxaloacetate reduction than for malate oxidation in vitro. Highly specific for NAD(H). Can also use NADPH for oxaloacetate reduction, but catalytic efficiency is 97-fold higher with NADH. No activity detected with NADP(+) and malate. In Streptomyces avermitilis (strain ATCC 31267 / DSM 46492 / JCM 5070 / NBRC 14893 / NCIMB 12804 / NRRL 8165 / MA-4680), this protein is Malate dehydrogenase.